Consider the following 504-residue polypeptide: Histidine--tRNA ligase (504 aa).

Belongs to the class-II aminoacyl-tRNA synthetase family. Homodimer.

The protein resides in the cytoplasm. The catalysed reaction is tRNA(His) + L-histidine + ATP = L-histidyl-tRNA(His) + AMP + diphosphate + H(+). The chain is Histidine--tRNA ligase (hisS) from Rhizobium meliloti (strain 1021) (Ensifer meliloti).